The sequence spans 885 residues: Sensor histidine kinase KdpD (885 aa).

4 helical membrane passes run 384-404 (AIDM…GLWI), 415-435 (IILM…RSFI), 436-456 (IGFL…TEPR), and 464-484 (FDYP…SALL). The 221-residue stretch at 660–880 (SISHDIRTPL…IFYFNIYTDF (221 aa)) folds into the Histidine kinase domain. The residue at position 663 (His663) is a Phosphohistidine; by autocatalysis.

It is found in the membrane. The enzyme catalyses ATP + protein L-histidine = ADP + protein N-phospho-L-histidine.. Its activity is regulated as follows. Cyclic di-AMP is a negative regulator of the Kdp system. Functionally, member of the two-component regulatory system KdpD/KdpE that regulates the transcription of a series of virulence factors through sensing external K(+) concentrations. Also regulates capsular polysaccharide production. May function as a membrane-associated protein kinase that phosphorylates KdpE in response to environmental signals. In turn, KpdE functions as a transcriptional regulator by direct binding to promoter regions of target genes including spa, hla, aur and geh. The polypeptide is Sensor histidine kinase KdpD (Staphylococcus aureus (strain NCTC 8325 / PS 47)).